The primary structure comprises 154 residues: Endoribonuclease YbeY (154 aa).

Zn(2+) is bound by residues H114, H118, and H124.

Belongs to the endoribonuclease YbeY family. Zn(2+) is required as a cofactor.

It localises to the cytoplasm. Single strand-specific metallo-endoribonuclease involved in late-stage 70S ribosome quality control and in maturation of the 3' terminus of the 16S rRNA. This Histophilus somni (strain 129Pt) (Haemophilus somnus) protein is Endoribonuclease YbeY.